A 506-amino-acid polypeptide reads, in one-letter code: F-box protein At4g02760 (506 aa).

An F-box domain is found at 115-161 (TSWPLLPELTIKVFSMLDTKSLMQASACCTMFNKCAMDRVCYSHIDL). Residues 452-506 (TFVAEFRSPSPSESDVRSPSPSSSSDSSSSSDSSSSSSSGESSDESGTEEEEDED) are disordered. Residues 459 to 492 (SPSPSESDVRSPSPSSSSDSSSSSDSSSSSSSGE) show a composition bias toward low complexity. The span at 493–506 (SSDESGTEEEEDED) shows a compositional bias: acidic residues.

The protein is F-box protein At4g02760 of Arabidopsis thaliana (Mouse-ear cress).